The sequence spans 606 residues: Glutamine--fructose-6-phosphate aminotransferase [isomerizing] (606 aa).

Catalysis depends on cysteine 2, which acts as the Nucleophile; for GATase activity. The 217-residue stretch at 2–218 (CGIFGYLGQR…SGELAVLRIG (217 aa)) folds into the Glutamine amidotransferase type-2 domain. SIS domains are found at residues 278–424 (FAES…QRQE) and 455–596 (WRCR…VDRP). The For Fru-6P isomerization activity role is filled by lysine 601.

As to quaternary structure, homodimer.

It is found in the cytoplasm. It carries out the reaction D-fructose 6-phosphate + L-glutamine = D-glucosamine 6-phosphate + L-glutamate. Its function is as follows. Catalyzes the first step in hexosamine metabolism, converting fructose-6P into glucosamine-6P using glutamine as a nitrogen source. The protein is Glutamine--fructose-6-phosphate aminotransferase [isomerizing] of Chlamydia muridarum (strain MoPn / Nigg).